The chain runs to 436 residues: MTVYHFVGIKGTGMSSLAQILHDMKHTVQGSDYEKRFFTQTALEKRSISILPFDKSNVKEGQVIIAGNAFPDTHEEIVAAKELNIPVHRYHHFLGDLMNQYTSVAVTGAHGKTSTTGLLAHVMQGAHPTSYLIGDGTGHGVENSKYFVFEACEYRRHFLSYNPDYAIMTNIDFDHPDYFTDINDVFSAFQEMALQVKKGIIACGDDEELQKIQAKVPVIFYGFGEDNDFQARNIQKRTDGTIFDVFVRNTYYDTFKITGYGNHSVLNALAVIALCHYENVDVEAVKHQLTTFEGVKRRFNEKPMGEQVIIDDYAHHPTEINATIEAARQKHPEREIVAVFQPHTFSRTEKFLDEFAESLSKADQVYLCDIFGSARENKGELTIEDLQKRIDGAELITDTTTDVLKKHKNGVLIFMGAGDIQKFEAAYVKEVQVAEK.

Position 108 to 114 (108 to 114) interacts with ATP; the sequence is GAHGKTS.

It belongs to the MurCDEF family.

The protein localises to the cytoplasm. The catalysed reaction is UDP-N-acetyl-alpha-D-muramate + L-alanine + ATP = UDP-N-acetyl-alpha-D-muramoyl-L-alanine + ADP + phosphate + H(+). It participates in cell wall biogenesis; peptidoglycan biosynthesis. Its function is as follows. Cell wall formation. In Bacillus cereus (strain AH187), this protein is UDP-N-acetylmuramate--L-alanine ligase.